The chain runs to 870 residues: Probable inorganic carbon transporter subunit DabA (870 aa).

Zn(2+) is bound by residues C381, D383, H564, and C579.

The protein belongs to the inorganic carbon transporter (TC 9.A.2) DabA family. In terms of assembly, forms a complex with DabB. Requires Zn(2+) as cofactor.

It is found in the cell membrane. Part of an energy-coupled inorganic carbon pump. The sequence is that of Probable inorganic carbon transporter subunit DabA from Geobacillus kaustophilus (strain HTA426).